A 92-amino-acid chain; its full sequence is Large ribosomal subunit protein eL43 (92 aa).

Zn(2+) is bound by residues Cys39, Cys42, Cys57, and Cys60. The C4-type zinc finger occupies 39-60; it reads CSFCGKTKMKRRAVGIWHCGSC.

The protein belongs to the eukaryotic ribosomal protein eL43 family. As to quaternary structure, component of the large ribosomal subunit.

The protein localises to the cytoplasm. Functionally, component of the large ribosomal subunit. The ribosome is a large ribonucleoprotein complex responsible for the synthesis of proteins in the cell. This is Large ribosomal subunit protein eL43 (Rpl37a) from Mus musculus (Mouse).